The sequence spans 234 residues: Uridylate kinase (234 aa).

An ATP-binding site is contributed by 10 to 11 (GS). Position 44 (Gly44) interacts with UMP. The ATP site is built by Gly45 and Arg49. Residues Asp66 and 114 to 120 (ITPGQTT) each bind UMP. ATP contacts are provided by Thr140, Tyr146, and Asp149.

Belongs to the UMP kinase family. In terms of assembly, homohexamer.

It is found in the cytoplasm. It carries out the reaction UMP + ATP = UDP + ADP. The protein operates within pyrimidine metabolism; CTP biosynthesis via de novo pathway; UDP from UMP (UMPK route): step 1/1. Inhibited by UTP. Its function is as follows. Catalyzes the reversible phosphorylation of UMP to UDP. This chain is Uridylate kinase, found in Methanoregula boonei (strain DSM 21154 / JCM 14090 / 6A8).